A 391-amino-acid chain; its full sequence is Formate-dependent phosphoribosylglycinamide formyltransferase (391 aa).

Residues 20–21 and E80 each bind N(1)-(5-phospho-beta-D-ribosyl)glycinamide; that span reads EL. Residues R112, K153, 158–163, 193–196, and E201 each bind ATP; these read SSGKGQ and EGFI. Positions 117–306 constitute an ATP-grasp domain; sequence RLAAEELGLT…EFALHVRAFT (190 aa). E265 and E277 together coordinate Mg(2+). Residues D284, K354, and 361-362 contribute to the N(1)-(5-phospho-beta-D-ribosyl)glycinamide site; that span reads RR.

Belongs to the PurK/PurT family. As to quaternary structure, homodimer.

It carries out the reaction N(1)-(5-phospho-beta-D-ribosyl)glycinamide + formate + ATP = N(2)-formyl-N(1)-(5-phospho-beta-D-ribosyl)glycinamide + ADP + phosphate + H(+). It functions in the pathway purine metabolism; IMP biosynthesis via de novo pathway; N(2)-formyl-N(1)-(5-phospho-D-ribosyl)glycinamide from N(1)-(5-phospho-D-ribosyl)glycinamide (formate route): step 1/1. Functionally, involved in the de novo purine biosynthesis. Catalyzes the transfer of formate to 5-phospho-ribosyl-glycinamide (GAR), producing 5-phospho-ribosyl-N-formylglycinamide (FGAR). Formate is provided by PurU via hydrolysis of 10-formyl-tetrahydrofolate. This Vibrio vulnificus (strain CMCP6) protein is Formate-dependent phosphoribosylglycinamide formyltransferase.